Here is a 57-residue protein sequence, read N- to C-terminus: Large ribosomal subunit protein bL32 (57 aa).

The span at methionine 1–glutamine 19 shows a compositional bias: basic residues. The tract at residues methionine 1 to tryptophan 20 is disordered.

The protein belongs to the bacterial ribosomal protein bL32 family.

This is Large ribosomal subunit protein bL32 from Corynebacterium aurimucosum (strain ATCC 700975 / DSM 44827 / CIP 107346 / CN-1) (Corynebacterium nigricans).